A 164-amino-acid polypeptide reads, in one-letter code: Large ribosomal subunit protein eL24z (164 aa).

Basic and acidic residues predominate over residues 117 to 133; that stretch reads ERIKKTKDEKKAKKVEY. Residues 117–164 are disordered; sequence ERIKKTKDEKKAKKVEYASKQQKSQVKGNIPKSAAPKAAKMGGGGGRR.

It belongs to the eukaryotic ribosomal protein eL24 family. Interacts with the cauliflower mosaic virus transactivator TAV to form a TAV/60S complex. Interacts with REIL1 AND REIL2.

Might have an extraribosomal function in reinitiation of translation. This chain is Large ribosomal subunit protein eL24z (RPL24A), found in Arabidopsis thaliana (Mouse-ear cress).